Here is a 203-residue protein sequence, read N- to C-terminus: Outer-membrane lipoprotein LolB (203 aa).

Positions 1 to 16 (MKTFLPCLFFLLILVG) are cleaved as a signal peptide. Cysteine 17 carries N-palmitoyl cysteine lipidation. The S-diacylglycerol cysteine moiety is linked to residue cysteine 17.

Belongs to the LolB family. In terms of assembly, monomer.

The protein resides in the cell outer membrane. Its function is as follows. Plays a critical role in the incorporation of lipoproteins in the outer membrane after they are released by the LolA protein. The sequence is that of Outer-membrane lipoprotein LolB from Psychromonas ingrahamii (strain DSM 17664 / CCUG 51855 / 37).